We begin with the raw amino-acid sequence, 309 residues long: MNKLTIVGAGLVGEAAAQIIARDELCRELVLMDVQGELAQGKALDVWQAAVESGSDTRVYGGAKAEMLDGSDLVVITAGVPRKPGQSRQDVLSINLPILDGIMTDIKHHAPAATVLVVSNPVDVLTYRAWSVSGLGRDKVFGQAGVLDTARMKCFIAEQTGFSAKDITALVLGGHGDSMVPLMRYCQIGSVPLSHFLSSEQIEQIVERTRKGGGEILGLKKMGSACDAPGVAIAQMVDAIANGRNRILPAVAILQGEYGRKDIAMGVPCVLADEGLARVIELPLDAQEQAMFDQSADQVARDIDEMKAL.

Residues 8–13 and D33 contribute to the NAD(+) site; that span reads GAGLVG. The substrate site is built by R82 and R88. NAD(+) is bound by residues N95 and 118–120; that span reads VSN. Residues N120 and R151 each contribute to the substrate site. Residue H175 is the Proton acceptor of the active site.

This sequence belongs to the LDH/MDH superfamily. MDH type 3 family.

It carries out the reaction (S)-malate + NAD(+) = oxaloacetate + NADH + H(+). Its function is as follows. Catalyzes the reversible oxidation of malate to oxaloacetate. This chain is Malate dehydrogenase, found in Pseudomonas putida (strain GB-1).